The sequence spans 639 residues: Kininogen-1 (639 aa).

The N-terminal stretch at 1 to 18 (MKLITILLLCSRLLPSLA) is a signal peptide. Positions 28-132 (CNDESLFQAV…TQICNITPGK (105 aa)) constitute a Cystatin kininogen-type 1 domain. Intrachain disulfides connect C28-C609, C83-C94, C107-C126, C142-C145, C206-C218, C229-C248, C264-C267, C328-C340, and C351-C370. N82 carries N-linked (GlcNAc...) asparagine glycosylation. The region spanning 151–254 (VDSPELGPVL…SDSCEFYPGD (104 aa)) is the Cystatin kininogen-type 2 domain. N169 and N205 each carry an N-linked (GlcNAc...) asparagine glycan. Positions 273-376 (VDSPELKEAL…TVKCKVLDMT (104 aa)) constitute a Cystatin kininogen-type 3 domain. N294 carries an N-linked (GlcNAc...) asparagine glycan. S332 is modified (phosphoserine). Disordered regions lie at residues 438 to 462 (NHQG…GHGH) and 476 to 547 (GYDH…LNPP). Positions 482-502 (PVGHGHGQRHGHGHGHGHGRD) are enriched in basic residues. Positions 503–519 (KHTNKDKNNVKHTDQRR) are enriched in basic and acidic residues. A compositionally biased stretch (polar residues) spans 522-537 (LTSSSEDNTTSTQIQG). A glycan (N-linked (GlcNAc...) asparagine) is linked at N529.

Post-translationally, bradykinin is released from kininogen by plasma kallikrein. Phosphorylated by FAM20C in the extracellular medium. In terms of processing, bradykinin is inactivated by ACE, which removes the dipeptide Arg-Phe from its C-terminus. In terms of tissue distribution, plasma.

The protein localises to the secreted. The protein resides in the extracellular space. In terms of biological role, kininogens are inhibitors of thiol proteases. HMW-kininogen plays an important role in blood coagulation by helping to position optimally prekallikrein and factor XI next to factor XII; HMW-kininogen inhibits the thrombin- and plasmin-induced aggregation of thrombocytes. LMW-kininogen inhibits the aggregation of thrombocytes. LMW-kininogen is in contrast to HMW-kininogen not involved in blood clotting. Functionally, the active peptide bradykinin is a potent vasodilatator that is released from HMW-kininogen shows a variety of physiological effects: (A) influence in smooth muscle contraction, (B) induction of hypotension, (C) natriuresis and diuresis, (D) decrease in blood glucose level, (E) it is a mediator of inflammation and causes (E1) increase in vascular permeability, (E2) stimulation of nociceptors (4E3) release of other mediators of inflammation (e.g. prostaglandins), (F) it has a cardioprotective effect (directly via bradykinin action, indirectly via endothelium-derived relaxing factor action). This is Kininogen-1 (Kng1) from Rattus norvegicus (Rat).